Consider the following 273-residue polypeptide: Large ribosomal subunit protein uL2 (273 aa).

A disordered region spans residues 228-273 (VDHPHGGGEGKTSGGRHPVTPWGFPTKGKKTRKNKRTSKFIVKKRK). The span at 254-273 (KGKKTRKNKRTSKFIVKKRK) shows a compositional bias: basic residues.

It belongs to the universal ribosomal protein uL2 family. As to quaternary structure, part of the 50S ribosomal subunit. Forms a bridge to the 30S subunit in the 70S ribosome.

Its function is as follows. One of the primary rRNA binding proteins. Required for association of the 30S and 50S subunits to form the 70S ribosome, for tRNA binding and peptide bond formation. It has been suggested to have peptidyltransferase activity; this is somewhat controversial. Makes several contacts with the 16S rRNA in the 70S ribosome. In Rickettsia felis (strain ATCC VR-1525 / URRWXCal2) (Rickettsia azadi), this protein is Large ribosomal subunit protein uL2.